A 345-amino-acid polypeptide reads, in one-letter code: MEGLEAYDYHLPPEQIAQEGVEPRDMARLMVVYREGPFRVAHKRVRDLPEFLRPGDVLVFNESKVIPARLLARKPTGGKVEILLVRERSPGLWEALLGPARKAPPGTRLLLLSPKDLAPVPGLQAEVVAVEEDGVRLLRFQGDLVAHLEEVGEVPLPPYIKAKIPMERYQTVYARRPGSVAAPTAGLHFTPELLERLREMGVELRFLTLHVGPGTFRPVKGDPEKHEMHAEPYAIPEEVAEAVNRAKAEGRRVVAVGTTVVRALESAYREGVGVVAGEGETRLFIRPPYTFKVVDALFTNFHLPRSTLLMLVAAFLGRERTLEAYRLAVAEGYRFYSLGDAMLIL.

This sequence belongs to the QueA family. Monomer.

It localises to the cytoplasm. It catalyses the reaction 7-aminomethyl-7-carbaguanosine(34) in tRNA + S-adenosyl-L-methionine = epoxyqueuosine(34) in tRNA + adenine + L-methionine + 2 H(+). Its pathway is tRNA modification; tRNA-queuosine biosynthesis. Functionally, transfers and isomerizes the ribose moiety from AdoMet to the 7-aminomethyl group of 7-deazaguanine (preQ1-tRNA) to give epoxyqueuosine (oQ-tRNA). The chain is S-adenosylmethionine:tRNA ribosyltransferase-isomerase from Thermus thermophilus (strain ATCC BAA-163 / DSM 7039 / HB27).